A 361-amino-acid polypeptide reads, in one-letter code: Chorismate synthase (361 aa).

Positions 48 and 54 each coordinate NADP(+). FMN is bound by residues 125 to 127 (RSS), 238 to 239 (NA), glycine 278, 293 to 297 (KPTSS), and arginine 319.

Belongs to the chorismate synthase family. As to quaternary structure, homotetramer. FMNH2 serves as cofactor.

The enzyme catalyses 5-O-(1-carboxyvinyl)-3-phosphoshikimate = chorismate + phosphate. It participates in metabolic intermediate biosynthesis; chorismate biosynthesis; chorismate from D-erythrose 4-phosphate and phosphoenolpyruvate: step 7/7. In terms of biological role, catalyzes the anti-1,4-elimination of the C-3 phosphate and the C-6 proR hydrogen from 5-enolpyruvylshikimate-3-phosphate (EPSP) to yield chorismate, which is the branch point compound that serves as the starting substrate for the three terminal pathways of aromatic amino acid biosynthesis. This reaction introduces a second double bond into the aromatic ring system. This Methylobacillus flagellatus (strain ATCC 51484 / DSM 6875 / VKM B-1610 / KT) protein is Chorismate synthase.